The sequence spans 360 residues: MSDIERLEQEICLALEAANDEQALEAVRIAALGKKGSISEKLKALGKMEASERQKAGPVLNGLKNRILELWAQKRDLLKRQAMDTRLSRETVDITLPVRSSPMERGRIHPISQVIEEIIAIYTKMGFSLAEGPDIETDYYNFTALNFPEGHPAREMHDTFFFDVDKIGERKLLRTHTSPVQIRTLEKQKAPIRIIIPGKTYRMDSDATHSPMFHQVEGLVIDKTSTIAHMMWLHETFCKEFFEVASVKMRFRPSFFPFTEPSMEVDIQCDRSGSEVKFGEGQDWLEILGCGMVHPHVLKNVGLDPDEYQGFAWGMGIDRIAMLKYGMPDLRAFFDADLRWLDHYGFRCFDMPAFFPNRNV.

Glutamate 260 contributes to the Mg(2+) binding site.

Belongs to the class-II aminoacyl-tRNA synthetase family. Phe-tRNA synthetase alpha subunit type 1 subfamily. Tetramer of two alpha and two beta subunits. Requires Mg(2+) as cofactor.

Its subcellular location is the cytoplasm. The catalysed reaction is tRNA(Phe) + L-phenylalanine + ATP = L-phenylalanyl-tRNA(Phe) + AMP + diphosphate + H(+). In Bartonella tribocorum (strain CIP 105476 / IBS 506), this protein is Phenylalanine--tRNA ligase alpha subunit.